A 301-amino-acid chain; its full sequence is Protein RESTRICTED TEV MOVEMENT 3 (301 aa).

An MATH domain is found at aspartate 6–isoleucine 134. A coiled-coil region spans residues lysine 235–serine 289.

In terms of assembly, self-interacts. Interacts with RTM1.

Functionally, required for the restriction of long-distance movement of the pathogenic tobacco etch virus (TEV) without causing a hypersensitive response or inducing systemic acquired resistance. The chain is Protein RESTRICTED TEV MOVEMENT 3 (RTM3) from Arabidopsis thaliana (Mouse-ear cress).